Consider the following 364-residue polypeptide: Aminomethyltransferase (364 aa).

This sequence belongs to the GcvT family. The glycine cleavage system is composed of four proteins: P, T, L and H.

The catalysed reaction is N(6)-[(R)-S(8)-aminomethyldihydrolipoyl]-L-lysyl-[protein] + (6S)-5,6,7,8-tetrahydrofolate = N(6)-[(R)-dihydrolipoyl]-L-lysyl-[protein] + (6R)-5,10-methylene-5,6,7,8-tetrahydrofolate + NH4(+). The glycine cleavage system catalyzes the degradation of glycine. The protein is Aminomethyltransferase of Shewanella sp. (strain MR-4).